The chain runs to 218 residues: Glutathione S-transferase Mu 5 (218 aa).

The GST N-terminal domain occupies 2-88 (PMTLGYWDIR…YIARKHNLCG (87 aa)). Residues 7-8 (YW), 46-50 (WLNEK), 59-60 (NL), and 72-73 (QS) contribute to the glutathione site. In terms of domain architecture, GST C-terminal spans 90 to 207 (TEEEKIRVDI…MKSSQFLRGL (118 aa)). Substrate is bound at residue Tyr116.

Belongs to the GST superfamily. Mu family. As to quaternary structure, homodimer.

Its subcellular location is the cytoplasm. The catalysed reaction is RX + glutathione = an S-substituted glutathione + a halide anion + H(+). Functionally, conjugation of reduced glutathione to a wide number of exogenous and endogenous hydrophobic electrophiles. The sequence is that of Glutathione S-transferase Mu 5 (GSTM5) from Homo sapiens (Human).